The chain runs to 134 residues: Ribosome-binding factor A (134 aa).

This sequence belongs to the RbfA family. As to quaternary structure, monomer. Binds 30S ribosomal subunits, but not 50S ribosomal subunits or 70S ribosomes.

The protein resides in the cytoplasm. Functionally, one of several proteins that assist in the late maturation steps of the functional core of the 30S ribosomal subunit. Associates with free 30S ribosomal subunits (but not with 30S subunits that are part of 70S ribosomes or polysomes). Required for efficient processing of 16S rRNA. May interact with the 5'-terminal helix region of 16S rRNA. This Psychrobacter arcticus (strain DSM 17307 / VKM B-2377 / 273-4) protein is Ribosome-binding factor A.